The following is a 495-amino-acid chain: Cobyric acid synthase (495 aa).

Residues 258–427 (GLRVAAVRLP…WHGLFDNDGF (170 aa)) enclose the GATase cobBQ-type domain. The active-site Nucleophile is the Cys-339. Residue His-419 is part of the active site.

It belongs to the CobB/CobQ family. CobQ subfamily.

The protein operates within cofactor biosynthesis; adenosylcobalamin biosynthesis. Its function is as follows. Catalyzes amidations at positions B, D, E, and G on adenosylcobyrinic A,C-diamide. NH(2) groups are provided by glutamine, and one molecule of ATP is hydrogenolyzed for each amidation. This chain is Cobyric acid synthase, found in Mycobacterium sp. (strain KMS).